A 363-amino-acid chain; its full sequence is Cytochrome b (363 aa).

The next 4 helical transmembrane spans lie at 23–43 (VGFI…LLTF), 67–89 (WFVR…IHII), 102–122 (SWYS…TGYV), and 164–184 (FFIL…LHLY). Heme b contacts are provided by H73 and H87. Heme b is bound by residues H168 and H182. Residue H187 participates in a ubiquinone binding. Transmembrane regions (helical) follow at residues 210-230 (ILFS…PQVG), 271-291 (VFPT…LLII), 309-329 (RVWT…GCIG), and 332-352 (VINL…TTFV).

It belongs to the cytochrome b family. The main subunits of complex b-c1 are: cytochrome b, cytochrome c1 and the Rieske protein. The cofactor is heme b.

Its subcellular location is the mitochondrion inner membrane. Its function is as follows. Component of the ubiquinol-cytochrome c reductase complex (complex III or cytochrome b-c1 complex) that is part of the mitochondrial respiratory chain. The b-c1 complex mediates electron transfer from ubiquinol to cytochrome c. Contributes to the generation of a proton gradient across the mitochondrial membrane that is then used for ATP synthesis. The polypeptide is Cytochrome b (MT-CYB) (Theileria parva (East coast fever infection agent)).